Consider the following 300-residue polypeptide: Coatomer subunit epsilon (300 aa).

It belongs to the COPE family. As to quaternary structure, oligomeric complex that consists of at least the alpha, beta, beta', gamma, delta, epsilon and zeta subunits.

It localises to the cytoplasm. The protein localises to the golgi apparatus membrane. It is found in the cytoplasmic vesicle. The protein resides in the COPI-coated vesicle membrane. Its function is as follows. The coatomer is a cytosolic protein complex that binds to dilysine motifs and reversibly associates with Golgi non-clathrin-coated vesicles, which further mediate biosynthetic protein transport from the ER, via the Golgi up to the trans Golgi network. The coatomer complex is required for budding from Golgi membranes, and is essential for the retrograde Golgi-to-ER transport of dilysine-tagged proteins. The protein is Coatomer subunit epsilon (cope) of Dictyostelium discoideum (Social amoeba).